A 134-amino-acid chain; its full sequence is Profilin-1 (134 aa).

A disulfide bridge connects residues Cys-13 and Cys-118. The short motif at 84 to 100 is the Involved in PIP2 interaction element; sequence AVIRGKKGSGGITIKKT. Thr-114 bears the Phosphothreonine mark.

The protein belongs to the profilin family. As to quaternary structure, occurs in many kinds of cells as a complex with monomeric actin in a 1:1 ratio. Phosphorylated by MAP kinases.

Its subcellular location is the cytoplasm. The protein resides in the cytoskeleton. In terms of biological role, binds to actin and affects the structure of the cytoskeleton. At high concentrations, profilin prevents the polymerization of actin, whereas it enhances it at low concentrations. This chain is Profilin-1, found in Olea europaea (Common olive).